The sequence spans 255 residues: EEF1A lysine methyltransferase 4 (255 aa).

S-adenosyl-L-methionine contacts are provided by Trp-26 and Tyr-30. Phosphotyrosine is present on Tyr-39. S-adenosyl-L-methionine is bound by residues Trp-41, Gly-66, 88-89 (DY), 113-114 (DV), and Lys-130. The short motif at 129 to 134 (EKGTLD) is the Required for methyltransferase activity element.

The protein belongs to the methyltransferase superfamily.

It carries out the reaction L-lysyl-[protein] + S-adenosyl-L-methionine = N(6)-methyl-L-lysyl-[protein] + S-adenosyl-L-homocysteine + H(+). It catalyses the reaction N(6)-methyl-L-lysyl-[protein] + S-adenosyl-L-methionine = N(6),N(6)-dimethyl-L-lysyl-[protein] + S-adenosyl-L-homocysteine + H(+). The enzyme catalyses N(6),N(6)-dimethyl-L-lysyl-[protein] + S-adenosyl-L-methionine = N(6),N(6),N(6)-trimethyl-L-lysyl-[protein] + S-adenosyl-L-homocysteine + H(+). In terms of biological role, protein-lysine methyltransferase that efficiently catalyzes three successive methylations on 'Lys-36' in eukaryotic translation elongation factor 1 alpha (EEF1A1 or EEF1A2). In Mus musculus (Mouse), this protein is EEF1A lysine methyltransferase 4.